The following is a 204-amino-acid chain: MASTTVWNPAAGVGSLKNSEKYLIDPDDFVGVLALSPCTVFKQGLFVEMSGLRLRALLTATKPAEPKRAVLHRSKRNVCLKACADGSINLAKALSSLRMPLCMVKIMTELSNASAPRGGMYRKRFEFTCYLGNVVSCTKCKSACLIDALLHFYKMDPKCVGEVMHLLIKAEDVYKPSNCVKMKAVNKLCPKAGTCKGKNPICNF.

The protein belongs to the baculoviridae LEF-2 family.

Functionally, required for late and very late gene expression. Specifically required for expression from the vp39 and polh promoters. The sequence is that of Late expression factor 2 (LEF-2) from Anticarsia gemmatalis nuclear polyhedrosis virus (AgMNPV).